The chain runs to 195 residues: Killer cell lectin-like receptor subfamily G member 1 (195 aa).

Topologically, residues 1 to 38 (MTDSVIYSMLELPTATQAQNDYGPQQKSSSSRPSCSCL) are cytoplasmic. Positions 5–10 (VIYSML) match the ITIM motif motif. The helical; Signal-anchor for type II membrane protein transmembrane segment at 39–59 (VAIALGLLTAVLLSVLLYQWI) threads the bilayer. The Extracellular segment spans residues 60–195 (LCQGSNYSTC…KCPFADQALF (136 aa)). An N-linked (GlcNAc...) asparagine glycan is attached at asparagine 65. A disulfide bridge links cysteine 75 with cysteine 86. The region spanning 82-185 (YGNHCYYFSV…CEVPLHWVCK (104 aa)) is the C-type lectin domain. N-linked (GlcNAc...) asparagine glycosylation is found at asparagine 97, asparagine 137, and asparagine 150. 2 disulfides stabilise this stretch: cysteine 103-cysteine 184 and cysteine 163-cysteine 176.

In terms of assembly, forms a monomer and homodimer; disulfide-linked. Interacts (via ITIM motif) with PTPN11 and INPP5D. In terms of tissue distribution, expressed specifically on natural killer (NK) cells and T-cells, mainly CD8 T-cells.

It localises to the cell membrane. Its function is as follows. Plays an inhibitory role on natural killer (NK) cells and T-cell functions upon binding to their non-MHC ligands. May mediate missing self recognition by binding to a highly conserved site on classical cadherins, enabling it to monitor expression of E-cadherin/CDH1, N-cadherin/CDH2 and R-cadherin/CDH4 on target cells. This chain is Killer cell lectin-like receptor subfamily G member 1 (KLRG1), found in Homo sapiens (Human).